The primary structure comprises 149 residues: Protein OPG200 (149 aa).

It belongs to the orthopoxvirus OPG200 family. As to quaternary structure, homodimers. Interacts with host IKBKB; this interaction inhibits host NF-kappa-B activation.

Functionally, contributes to virulence by binding to the host IKBKB subunit of the IKK complex and preventing host NF-kappa-B activation in response to pro-inflammatory stimuli such as TNF-alpha or IL1B. Mechanistically, sterically hinders the direct contact between the kinase domains of IKBKB in the IKK complex containing IKBKB, CHUK/IKKA and NEMO. In Cynomys gunnisoni (Gunnison's prairie dog), this protein is Protein OPG200 (OPG200).